We begin with the raw amino-acid sequence, 320 residues long: tRNA dimethylallyltransferase (320 aa).

10 to 17 contributes to the ATP binding site; that stretch reads GPTASGKT. 12-17 lines the substrate pocket; sequence TASGKT. 3 interaction with substrate tRNA regions span residues 35-38, 159-163, and 241-246; these read DSAL, QRIQR, and RCVGYR.

Belongs to the IPP transferase family. Monomer. Mg(2+) is required as a cofactor.

It catalyses the reaction adenosine(37) in tRNA + dimethylallyl diphosphate = N(6)-dimethylallyladenosine(37) in tRNA + diphosphate. Catalyzes the transfer of a dimethylallyl group onto the adenine at position 37 in tRNAs that read codons beginning with uridine, leading to the formation of N6-(dimethylallyl)adenosine (i(6)A). The polypeptide is tRNA dimethylallyltransferase (Aromatoleum aromaticum (strain DSM 19018 / LMG 30748 / EbN1) (Azoarcus sp. (strain EbN1))).